The primary structure comprises 333 residues: Protein RecA (333 aa).

69 to 76 (GPESSGKT) lines the ATP pocket.

Belongs to the RecA family.

The protein resides in the cytoplasm. Can catalyze the hydrolysis of ATP in the presence of single-stranded DNA, the ATP-dependent uptake of single-stranded DNA by duplex DNA, and the ATP-dependent hybridization of homologous single-stranded DNAs. It interacts with LexA causing its activation and leading to its autocatalytic cleavage. The protein is Protein RecA of Mesoplasma florum (strain ATCC 33453 / NBRC 100688 / NCTC 11704 / L1) (Acholeplasma florum).